A 273-amino-acid polypeptide reads, in one-letter code: Formamidopyrimidine-DNA glycosylase (273 aa).

Catalysis depends on proline 2, which acts as the Schiff-base intermediate with DNA. Glutamate 3 acts as the Proton donor in catalysis. Catalysis depends on lysine 58, which acts as the Proton donor; for beta-elimination activity. DNA contacts are provided by histidine 91, arginine 109, and arginine 154. The segment at 239–273 (FVYARTGEPCRICNAPVRQIVQGQRSTFYCPNCQK) adopts an FPG-type zinc-finger fold. Arginine 263 serves as the catalytic Proton donor; for delta-elimination activity.

The protein belongs to the FPG family. Monomer. The cofactor is Zn(2+).

It catalyses the reaction Hydrolysis of DNA containing ring-opened 7-methylguanine residues, releasing 2,6-diamino-4-hydroxy-5-(N-methyl)formamidopyrimidine.. The enzyme catalyses 2'-deoxyribonucleotide-(2'-deoxyribose 5'-phosphate)-2'-deoxyribonucleotide-DNA = a 3'-end 2'-deoxyribonucleotide-(2,3-dehydro-2,3-deoxyribose 5'-phosphate)-DNA + a 5'-end 5'-phospho-2'-deoxyribonucleoside-DNA + H(+). Its function is as follows. Involved in base excision repair of DNA damaged by oxidation or by mutagenic agents. Acts as a DNA glycosylase that recognizes and removes damaged bases. Has a preference for oxidized purines, such as 7,8-dihydro-8-oxoguanine (8-oxoG). Has AP (apurinic/apyrimidinic) lyase activity and introduces nicks in the DNA strand. Cleaves the DNA backbone by beta-delta elimination to generate a single-strand break at the site of the removed base with both 3'- and 5'-phosphates. The polypeptide is Formamidopyrimidine-DNA glycosylase (Herminiimonas arsenicoxydans).